A 256-amino-acid polypeptide reads, in one-letter code: Probable serine/threonine-protein kinase YbdM (256 aa).

Residues 25-256 (YKIEECLGMG…DLNRAIQSVT (232 aa)) form the Protein kinase domain. Residues 31–39 (LGMGGYGLV) and Lys54 contribute to the ATP site. The Proton acceptor role is filled by Asp149.

Belongs to the protein kinase superfamily. Ser/Thr protein kinase family.

The catalysed reaction is L-seryl-[protein] + ATP = O-phospho-L-seryl-[protein] + ADP + H(+). The enzyme catalyses L-threonyl-[protein] + ATP = O-phospho-L-threonyl-[protein] + ADP + H(+). The sequence is that of Probable serine/threonine-protein kinase YbdM (ybdM) from Bacillus subtilis (strain 168).